The following is a 430-amino-acid chain: V-type ATP synthase beta chain 1 (430 aa).

Belongs to the ATPase alpha/beta chains family.

Its function is as follows. Produces ATP from ADP in the presence of a proton gradient across the membrane. The V-type beta chain is a regulatory subunit. This is V-type ATP synthase beta chain 1 (atpB1) from Treponema pallidum (strain Nichols).